Consider the following 205-residue polypeptide: uncharacterized protein (205 aa).

The Nudix hydrolase domain maps to 51–189 (ANVDAVAILA…KKGFAIDVRL (139 aa)). The Nudix box signature appears at 90–111 (GLVDSKESCEDAAIRELREETG).

The protein belongs to the Nudix hydrolase family.

The protein resides in the cytoplasm. It is found in the nucleus. This is an uncharacterized protein from Schizosaccharomyces pombe (strain 972 / ATCC 24843) (Fission yeast).